A 428-amino-acid chain; its full sequence is ORC1-type DNA replication protein 5 (428 aa).

Residues 62–66 (TGKSL), Y219, and R231 each bind ATP.

It belongs to the CDC6/cdc18 family.

Its function is as follows. Involved in regulation of DNA replication. This chain is ORC1-type DNA replication protein 5 (orc5), found in Halobacterium salinarum (strain ATCC 700922 / JCM 11081 / NRC-1) (Halobacterium halobium).